A 35-amino-acid chain; its full sequence is Putative gastric cancer-related gene 224 protein (35 aa).

Expressed in gastric mucosa.

The protein is Putative gastric cancer-related gene 224 protein (GCRG224) of Homo sapiens (Human).